Reading from the N-terminus, the 453-residue chain is Protein LIAT1 (453 aa).

Residues 1 to 152 (METRGPGLAV…HLPSDSSTVS (152 aa)) are disordered. The interval 82–103 (KRKVKKKKRKKKTKGSGKGDDK) is lysine-rich domain. Over residues 83 to 96 (RKVKKKKRKKKTKG) the composition is skewed to basic residues. Over residues 106-117 (SQSLKSQPLSSS) the composition is skewed to low complexity. A compositionally biased stretch (basic and acidic residues) spans 125 to 145 (CKERGPKPEHRQSKVEKKHLP). Residues 145–197 (PSDSSTVSLPDFAEIENLANRINESLRWDGILADPEAEKERIRIYKLNRRKRY) are interaction with ATE1. 20 repeat units span residues 201 to 210 (ALKGFHPDPE), 211 to 220 (ALKGFHPDPD), 221 to 230 (ALKGFHPDPE), 231 to 240 (ALKGFHPDPE), 241 to 250 (ALKGFHPDPE), 251 to 260 (ALKGFHPDPE), 261 to 270 (ALKGIHPDPE), 271 to 280 (ALKGIHPDPE), 281 to 290 (ALKGFHPDPE), 291 to 300 (ALKGFHPDPE), 301 to 310 (ALKGFHTDPE), 311 to 320 (ALKGFHIDPE), 321 to 330 (ALKGFHPDPK), 331 to 340 (ALKGFHPDPK), 341 to 350 (ALKGFHTDPE), 351 to 360 (ALKGFHPDPK), 361 to 370 (ALKGFHPDPE), 371 to 380 (ALKGFHPDPE), 381 to 390 (ALKGFHPDPE), and 391 to 400 (ALKGFHTDPN). Residues 201–400 (ALKGFHPDPE…ALKGFHTDPN (200 aa)) are 20 X 10 AA approximate tandem repeat of A-L-K-G-F-H-P-D-P-E. Disordered stretches follow at residues 225–306 (FHPD…KGFH) and 320–432 (EALK…CPNL). Residues 320 to 396 (EALKGFHPDP…PDPEALKGFH (77 aa)) are compositionally biased toward basic and acidic residues.

Self-associates (via Lys-rich domain); targets LIAT1 to the nucleolus. Interacts with ATE1; it is not a substrate of ATE1, the interaction takes place in the cytoplasm and seems to increase ATE1 arginyltransferase activity. Interacts with JMJD6 and MRPS14. Post-translationally, post-translationally modified by JMJD6 lysyl-hydroxylase activity at its Lys-rich domain, which inhibits its self-association and nucleolar localization.

The protein resides in the nucleus. It localises to the nucleolus. The protein localises to the cytoplasm. Its function is as follows. Participates in nucleolar liquid-liquid phase separation (LLPS) through its N-terminal intrinsically disordered region (IDR). May be involved in ATE1-mediated N-terminal arginylation. This chain is Protein LIAT1, found in Homo sapiens (Human).